Reading from the N-terminus, the 186-residue chain is Apolipophorin-3 (186 aa).

A signal peptide spans 1–18 (MAAKYVFVVAACSALAQA). Residues 19–23 (GIVRR) constitute a propeptide that is removed on maturation.

It belongs to the insect apolipophorin-3 family. Equilibrium between a soluble monomer and a bound lipoprotein form. Apolipophorin-3 associates with lipophorin during lipid loading until each particle contains 9 or 14 molecules of apolipophorin-3. In terms of tissue distribution, expressed in hemolymph. Also found in hemocytes and fat body.

It is found in the secreted. In terms of biological role, assists in the loading of diacylglycerol, generated from triacylglycerol stores in the fat body through the action of adipokinetic hormone, into lipophorin, the hemolymph lipoprotein. It increases the lipid carrying capacity of lipophorin by covering the expanding hydrophobic surface resulting from diacylglycerol uptake. It thus plays a critical role in the transport of lipids during flight in several species of insects. Has antibacterial activity against the Gram-positive bacteria L.monocytogenes (MIC=6.5 uM). Lacks antibacterial activity against the Gram-positive bacteria B.circulans, M.luteus, S.aureus, and S.lutea, and the Gram-negative bacteria E.coli D31, E.coli ATCC 25922, and S.typhimurium. Lacks antifungal activity against S.cerevisiae, P.pastoris, Z.marxianus, C.albicans, C.wickerhamii, A.niger, F.oxysporum, and T.harizianum. The polypeptide is Apolipophorin-3 (Galleria mellonella (Greater wax moth)).